The primary structure comprises 541 residues: Atlastin-3 (541 aa).

A disordered region spans residues 1 to 22 (MLSPQRTAAVASRGAGDAMENG). Residues 1–25 (MLSPQRTAAVASRGAGDAMENGKPG) are N-terminal hypervariable region (HVR). The Cytoplasmic portion of the chain corresponds to 1-445 (MLSPQRTAAV…NVFSTFRTPA (445 aa)). The GB1/RHD3-type G domain occupies 57 to 306 (DLDVVVVSVA…LIPYVLNPSK (250 aa)). Residues Arg-70, Lys-71, Gly-72, Lys-73, Ser-74, Phe-75, and Arg-109 each coordinate GDP. Asp-142 serves as a coordination point for Mg(2+). Residues Arg-213, Asp-214, Val-272, and Ser-275 each coordinate GDP. A 3HB (three-helix bundle) domain region spans residues 344-434 (MLQATAANNL…YENFCKHNGS (91 aa)). N6-acetyllysine is present on Lys-391. Residues 446-466 (VLFTGIAVLYIASGLTGFIGL) traverse the membrane as a helical segment. Residue Glu-467 is a topological domain, lumenal. The chain crosses the membrane as a helical span at residues 468–488 (VVAQLFNCMVGLLLIALLTWG). Topologically, residues 489 to 541 (YIRYSGQYLELGGAIDSGAAYVLEQASSHIGNSTQAAVRDAIAGRPPADKKSQ) are cytoplasmic.

Belongs to the TRAFAC class dynamin-like GTPase superfamily. GB1/RHD3 GTPase family. GB1 subfamily. As to quaternary structure, monomeric and homodimeric. The homodimer, transiently formed by two molecules on opposing membranes, is the active form mediating ER membrane fusion. Interacts with ZFYVE27; both proteins are involved in endoplasmic reticulum tubular network organization. Interacts with REEP5; both proteins are involved in endoplasmic reticulum tubular network organization.

It localises to the endoplasmic reticulum membrane. It catalyses the reaction GTP + H2O = GDP + phosphate + H(+). Functionally, atlastin-3 (ATL3) is a membrane-anchored GTPase that mediates the GTP-dependent fusion of endoplasmic reticulum (ER) membranes, maintaining the continuous ER network. It facilitates the formation of three-way junctions where ER tubules intersect. Two atlastin-3 on neighboring ER tubules bind GTP and form loose homodimers through the GB1/RHD3-type G domains and 3HB regions. Upon GTP hydrolysis, the 3HB regions tighten, pulling the membranes together to drive their fusion. After fusion, the homodimer disassembles upon release of inorganic phosphate (Pi). Subsequently, GDP dissociates, resetting the monomers to a conformation ready for a new fusion cycle. This chain is Atlastin-3, found in Rattus norvegicus (Rat).